The primary structure comprises 414 residues: 5-aminolevulinate synthase (414 aa).

Positions 22, 133, and 152 each coordinate substrate. Pyridoxal 5'-phosphate is bound by residues Ser-185, His-213, and Thr-241. Lys-244 is a catalytic residue. Position 244 is an N6-(pyridoxal phosphate)lysine (Lys-244). Pyridoxal 5'-phosphate is bound by residues Thr-273 and Thr-274. Position 359 (Thr-359) interacts with substrate.

Belongs to the class-II pyridoxal-phosphate-dependent aminotransferase family. As to quaternary structure, homodimer. Pyridoxal 5'-phosphate serves as cofactor.

It catalyses the reaction succinyl-CoA + glycine + H(+) = 5-aminolevulinate + CO2 + CoA. It participates in porphyrin-containing compound metabolism; protoporphyrin-IX biosynthesis; 5-aminolevulinate from glycine: step 1/1. The chain is 5-aminolevulinate synthase (hemA) from Rickettsia typhi (strain ATCC VR-144 / Wilmington).